The chain runs to 380 residues: Erythronate-4-phosphate dehydrogenase (380 aa).

Residues Ser45 and Thr66 each coordinate substrate. Residues Asp146, Thr174, 205–207, and Asp231 contribute to the NAD(+) site; that span reads ASR. The active site involves Arg207. Residue Glu236 is part of the active site. His253 (proton donor) is an active-site residue. Gly256 lines the NAD(+) pocket. A substrate-binding site is contributed by Tyr257.

The protein belongs to the D-isomer specific 2-hydroxyacid dehydrogenase family. PdxB subfamily. In terms of assembly, homodimer.

It localises to the cytoplasm. The catalysed reaction is 4-phospho-D-erythronate + NAD(+) = (R)-3-hydroxy-2-oxo-4-phosphooxybutanoate + NADH + H(+). Its pathway is cofactor biosynthesis; pyridoxine 5'-phosphate biosynthesis; pyridoxine 5'-phosphate from D-erythrose 4-phosphate: step 2/5. Catalyzes the oxidation of erythronate-4-phosphate to 3-hydroxy-2-oxo-4-phosphonooxybutanoate. This Pseudomonas fluorescens (strain SBW25) protein is Erythronate-4-phosphate dehydrogenase.